The sequence spans 840 residues: Phosphatidylinositol-glycan-specific phospholipase D (840 aa).

The first 23 residues, 1 to 23 (MSAFRLWPGLLIMLGSLCHRGSP), serve as a signal peptide directing secretion. N-linked (GlcNAc...) asparagine glycans are attached at residues asparagine 94, asparagine 271, asparagine 292, asparagine 307, and asparagine 321. FG-GAP repeat units lie at residues 367-428 (SPLA…GLPP), 436-497 (EAHR…GGMS), 499-559 (SPNI…LSDK), 563-623 (NVEA…SLGR), 633-693 (QSWF…GATR), 704-770 (LLLS…TLGD), and 788-840 (QYVL…LGSD). 5 N-linked (GlcNAc...) asparagine glycosylation sites follow: asparagine 501, asparagine 568, asparagine 591, asparagine 604, and asparagine 659.

Belongs to the GPLD1 family. Monomer.

Its subcellular location is the secreted. It carries out the reaction a 6-(alpha-D-glucosaminyl)-1-(1,2-diacyl-sn-glycero-3-phospho)-1D-myo-inositol + H2O = 6-(alpha-D-glucosaminyl)-1D-myo-inositol + a 1,2-diacyl-sn-glycero-3-phosphate + H(+). This protein hydrolyzes the inositol phosphate linkage in proteins anchored by phosphatidylinositol glycans (GPI-anchor) thus releasing these proteins from the membrane. The chain is Phosphatidylinositol-glycan-specific phospholipase D (GPLD1) from Homo sapiens (Human).